A 119-amino-acid chain; its full sequence is Large ribosomal subunit protein uL18 (119 aa).

Belongs to the universal ribosomal protein uL18 family. In terms of assembly, part of the 50S ribosomal subunit; part of the 5S rRNA/L5/L18/L25 subcomplex. Contacts the 5S and 23S rRNAs.

Its function is as follows. This is one of the proteins that bind and probably mediate the attachment of the 5S RNA into the large ribosomal subunit, where it forms part of the central protuberance. The chain is Large ribosomal subunit protein uL18 from Solibacter usitatus (strain Ellin6076).